A 25-amino-acid polypeptide reads, in one-letter code: Panurgine K (25 aa).

2 cysteine pairs are disulfide-bonded: Cys-8–Cys-23 and Cys-11–Cys-19.

Its subcellular location is the target cell membrane. The protein resides in the secreted. Functionally, antimicrobial peptide active against Gram-positive bacteria M.luteus (MIC=1.6 uM) and B.subtilis (MIC=3.3 uM). Less active against Gram-negative bacteria E.coli (MIC=63.3 uM) and yeast C.albicans (MIC=24.2 uM). Not active against S.aureus and P.aeruginosa. Has no hemolytic activity against human erythrocytes. Probably acts by disrupting membranes of target cells. The polypeptide is Panurgine K (Panurgus calcaratus (Solitary bee)).